A 224-amino-acid polypeptide reads, in one-letter code: Propanediol dehydratase medium subunit (224 aa).

The interval 1-18 (MEINEKLLRQIIEDVLSE) is targets protein to the BMC.

This sequence belongs to the diol/glycerol dehydratase medium subunit family. The propanediol dehydratase enzyme is a heterotrimeric complex composed of a large (PduC), a medium (PduD) and a small (PduE) subunit. The cofactor is adenosylcob(III)alamin.

It localises to the bacterial microcompartment. The enzyme catalyses propane-1,2-diol = propanal + H2O. It participates in polyol metabolism; 1,2-propanediol degradation. Its function is as follows. Part of the PduCDE complex that catalyzes the dehydration of 1,2-propanediol (1,2-PD) to propionaldehyde. This subunit is directly targeted to the bacterial microcompartment (BMC). Expression of a cosmid containing the full 21-gene pdu operon in E.coli allows E.coli to grow on 1,2-propanediol (1,2-PD) with the appearance of BMCs in its cytoplasm. In terms of biological role, the 1,2-PD-specific bacterial microcompartment (BMC) concentrates low levels of 1,2-PD catabolic enzymes, concentrates volatile reaction intermediates thus enhancing pathway flux and keeps the level of toxic, mutagenic propionaldehyde low. This is Propanediol dehydratase medium subunit from Citrobacter freundii.